Here is an 890-residue protein sequence, read N- to C-terminus: MLLNMNLQELKQKYNYDVATKMMQQYLDIKFAHLDCLLLFRMGDFYEMFYEDAILASNVLGIALTKRGKNGEEEIAMCGVPYHALENYLTKLIEANYKVAICDQLETPEEAKNRGGYKAVVTRDVTRIITPGTIIEENLIASAEPNYLASLVIPKNKETASLCYVDLSTSEIVVVNVPETEILNELARLKPREILLSENLRSSNLADSIFKQLNLRITYQVDSFFAINKCEKIILDFYKMKDIKGIGEISSSQICAIGSVLEYLSLTQKQNIPHLPIPRIIKFHSYMTIDFSTRRNLEIVTNSQGGSQGSLLSTLNHTVTKQGGRLLYNFLSSPLTNIAKINHRLNITEFFYSNLEIVKKIRELLKKTSDIERCLTRITMNRSSGRDLLSIKYTLETATIIKGVFFDAYGFNLPDFIEKIIKPLSGDAELYNLIDETIREDAPNNLNDGGIIKHEYHPKVAQLHDLINNGKLYIEKLKDQYRKETGIDSLKISHNNVIGLFIDITAKNVNKILDPKFIHRQTTVNHVRYTTAELQKLESELVNAKTLVISLEKELYADICSQVIEKASYLRILASSLSGLDVFCNFAYIADEYDYVKPEFTDDLSFDIVKGRHPVVEKALQRESKSFVYNDCHLSELERIWLITGPNMAGKSTFLRQNAIIAIIAQIGSFVPAKSAKIGVVDKIFSRIGAADDLIKGQSTFMAEMLETSAILAQSTKNSLIILDEVGRGTSTYDGVSIAWSVLEYIHDKLKCRCLFATHYHELTVMSNFLPALQNYTIAIEESGKDILFLHNIISGAADRSYGLHVASLAGLPASVINRAEQILLKFEKTSTGKGKNILSTESNNLSLFYLEPNKTTISSKLDKKFRTIDPDKLSPKEALELIYELKKLV.

645-652 (GPNMAGKS) serves as a coordination point for ATP.

This sequence belongs to the DNA mismatch repair MutS family.

This protein is involved in the repair of mismatches in DNA. It is possible that it carries out the mismatch recognition step. This protein has a weak ATPase activity. The protein is DNA mismatch repair protein MutS of Rickettsia africae (strain ESF-5).